The following is a 612-amino-acid chain: UvrABC system protein C (612 aa).

The GIY-YIG domain occupies Thr-20–Ile-98. The UVR domain maps to Ser-208–Leu-243.

Belongs to the UvrC family. As to quaternary structure, interacts with UvrB in an incision complex.

The protein localises to the cytoplasm. Its function is as follows. The UvrABC repair system catalyzes the recognition and processing of DNA lesions. UvrC both incises the 5' and 3' sides of the lesion. The N-terminal half is responsible for the 3' incision and the C-terminal half is responsible for the 5' incision. This Francisella tularensis subsp. novicida (strain U112) protein is UvrABC system protein C.